Consider the following 406-residue polypeptide: Peptidase T (406 aa).

H78 serves as a coordination point for Zn(2+). D80 is an active-site residue. A Zn(2+)-binding site is contributed by D139. The Proton acceptor role is filled by E173. 3 residues coordinate Zn(2+): E174, D196, and H378.

The protein belongs to the peptidase M20B family. Zn(2+) serves as cofactor.

It is found in the cytoplasm. The enzyme catalyses Release of the N-terminal residue from a tripeptide.. Functionally, cleaves the N-terminal amino acid of tripeptides. In Clostridium perfringens (strain 13 / Type A), this protein is Peptidase T.